The sequence spans 205 residues: MPVVFVAASKLPTPFAEFAMHGFIESATGREHVVLSLGDVADGAPVLGRVHSECLTGDALFSQRCDCGSQLEAAMRAIATEGRGVLLYLRQEGRGIGLMNKIRAYELQDGGADTVEANERLGFAADQRDYAICLPMLQHLGVQSLRLMTNNPRKVKALTDMGINVAERVPLHTGQNPHNRLYLATKAGKLGHMMGNEHQSEVGPA.

A GTP-binding site is contributed by 49–53 (RVHSE). 3 residues coordinate Zn(2+): Cys-54, Cys-65, and Cys-67. Residues Gln-70, 92–94 (EGR), and Thr-114 contribute to the GTP site. The Proton acceptor role is filled by Asp-126. Arg-128 acts as the Nucleophile in catalysis. Positions 149 and 154 each coordinate GTP.

The protein belongs to the GTP cyclohydrolase II family. The cofactor is Zn(2+).

It carries out the reaction GTP + 4 H2O = 2,5-diamino-6-hydroxy-4-(5-phosphoribosylamino)-pyrimidine + formate + 2 phosphate + 3 H(+). It functions in the pathway cofactor biosynthesis; riboflavin biosynthesis; 5-amino-6-(D-ribitylamino)uracil from GTP: step 1/4. Catalyzes the conversion of GTP to 2,5-diamino-6-ribosylamino-4(3H)-pyrimidinone 5'-phosphate (DARP), formate and pyrophosphate. In Pseudomonas syringae pv. tomato (strain ATCC BAA-871 / DC3000), this protein is GTP cyclohydrolase-2.